Consider the following 201-residue polypeptide: NADH-quinone oxidoreductase subunit C 1 (201 aa).

Belongs to the complex I 30 kDa subunit family. NDH-1 is composed of 14 different subunits. Subunits NuoB, C, D, E, F, and G constitute the peripheral sector of the complex.

It localises to the cell inner membrane. It carries out the reaction a quinone + NADH + 5 H(+)(in) = a quinol + NAD(+) + 4 H(+)(out). Its function is as follows. NDH-1 shuttles electrons from NADH, via FMN and iron-sulfur (Fe-S) centers, to quinones in the respiratory chain. The immediate electron acceptor for the enzyme in this species is believed to be ubiquinone. Couples the redox reaction to proton translocation (for every two electrons transferred, four hydrogen ions are translocated across the cytoplasmic membrane), and thus conserves the redox energy in a proton gradient. This Rhizobium meliloti (strain 1021) (Ensifer meliloti) protein is NADH-quinone oxidoreductase subunit C 1.